The chain runs to 348 residues: S-adenosylmethionine:tRNA ribosyltransferase-isomerase (348 aa).

The protein belongs to the QueA family. As to quaternary structure, monomer.

It is found in the cytoplasm. It catalyses the reaction 7-aminomethyl-7-carbaguanosine(34) in tRNA + S-adenosyl-L-methionine = epoxyqueuosine(34) in tRNA + adenine + L-methionine + 2 H(+). The protein operates within tRNA modification; tRNA-queuosine biosynthesis. Functionally, transfers and isomerizes the ribose moiety from AdoMet to the 7-aminomethyl group of 7-deazaguanine (preQ1-tRNA) to give epoxyqueuosine (oQ-tRNA). In Amoebophilus asiaticus (strain 5a2), this protein is S-adenosylmethionine:tRNA ribosyltransferase-isomerase.